A 343-amino-acid polypeptide reads, in one-letter code: L-threonine 3-dehydrogenase (343 aa).

Cys40 contributes to the Zn(2+) binding site. Residues Thr42 and His45 each act as charge relay system in the active site. Positions 65, 66, 95, 98, 101, and 109 each coordinate Zn(2+). Residues Ile177, Asp197, Arg202, 264-266 (LGI), and 288-289 (IY) contribute to the NAD(+) site.

Belongs to the zinc-containing alcohol dehydrogenase family. In terms of assembly, homotetramer. Requires Zn(2+) as cofactor.

It localises to the cytoplasm. It carries out the reaction L-threonine + NAD(+) = (2S)-2-amino-3-oxobutanoate + NADH + H(+). It functions in the pathway amino-acid degradation; L-threonine degradation via oxydo-reductase pathway; glycine from L-threonine: step 1/2. Catalyzes the NAD(+)-dependent oxidation of L-threonine to 2-amino-3-ketobutyrate. The sequence is that of L-threonine 3-dehydrogenase from Vibrio vulnificus (strain CMCP6).